Reading from the N-terminus, the 1375-residue chain is Capping protein, Arp2/3 and myosin-I linker protein 3 (1375 aa).

The tract at residues 124–151 (IRRGNADTPEGPRDTSPNSETSTSTTHS) is disordered. A compositionally biased stretch (low complexity) spans 138 to 151 (TSPNSETSTSTTHS). 10 LRR repeats span residues 244–264 (SLEE…QKLA), 274–295 (VLHA…SLSQ), 303–323 (GLTK…QALG), 335–357 (SLRY…NALY), 365–386 (ALVH…GALL), 392–413 (HLTY…EAPP), 424–444 (TLSH…RALL), 455–475 (DLHL…ALQE), 482–501 (CIGS…LTLV), and 509–530 (SLKH…EEIL). 2 disordered regions span residues 864–901 (RTLS…GTNI) and 969–1375 (KLRH…PGTD). A compositionally biased stretch (pro residues) spans 981–997 (PRTTPPGPGRPSVPVPG). Over residues 1007 to 1022 (RLDEGLEDFFSRRVMD) the composition is skewed to basic and acidic residues. Positions 1047-1062 (QKKRRRGLFHFRRPRS) are enriched in basic residues. The span at 1078-1097 (LPPPPPPPPTQESPPSPDPP) shows a compositional bias: pro residues. Over residues 1098–1108 (SLGNNSSPCWS) the composition is skewed to low complexity. The span at 1219–1229 (RRAEATWHIAE) shows a compositional bias: basic and acidic residues. Positions 1233-1244 (ANHSCQSPSPAS) are enriched in polar residues. Pro residues predominate over residues 1272–1281 (PIGPRPPKPV). Residues 1348 to 1360 (QSCDKLEPDRRQP) show a composition bias toward basic and acidic residues.

The protein belongs to the CARMIL family.

Its subcellular location is the cytoplasm. It localises to the cell membrane. The protein is Capping protein, Arp2/3 and myosin-I linker protein 3 (Carmil3) of Mus musculus (Mouse).